The sequence spans 206 residues: Purine nucleoside phosphorylase aq_167 (206 aa).

Residues His42, Cys78, and His93 each contribute to the Zn(2+) site.

The protein belongs to the purine nucleoside phosphorylase YfiH/LACC1 family. As to quaternary structure, homodimer. Cu(2+) serves as cofactor. The cofactor is Zn(2+).

The enzyme catalyses adenosine + phosphate = alpha-D-ribose 1-phosphate + adenine. It carries out the reaction S-methyl-5'-thioadenosine + phosphate = 5-(methylsulfanyl)-alpha-D-ribose 1-phosphate + adenine. It catalyses the reaction inosine + phosphate = alpha-D-ribose 1-phosphate + hypoxanthine. The catalysed reaction is adenosine + H2O + H(+) = inosine + NH4(+). In terms of biological role, purine nucleoside enzyme that catalyzes the phosphorolysis of adenosine and inosine nucleosides, yielding D-ribose 1-phosphate and the respective free bases, adenine and hypoxanthine. Also catalyzes the phosphorolysis of S-methyl-5'-thioadenosine into adenine and S-methyl-5-thio-alpha-D-ribose 1-phosphate. Also has adenosine deaminase activity. This Aquifex aeolicus (strain VF5) protein is Purine nucleoside phosphorylase aq_167.